Consider the following 506-residue polypeptide: Maturase K (506 aa).

It belongs to the intron maturase 2 family. MatK subfamily.

The protein resides in the plastid. It is found in the chloroplast. Its function is as follows. Usually encoded in the trnK tRNA gene intron. Probably assists in splicing its own and other chloroplast group II introns. In Mentzelia lindleyi (Blazing star), this protein is Maturase K.